The following is a 487-amino-acid chain: Dihydrofolate synthase/folylpolyglutamate synthase (487 aa).

44–46 (DPS) is a 7,8-dihydropteroate binding site. 74–77 (GKTS) serves as a coordination point for ATP. Mg(2+) is bound by residues Thr76 and Ser98. Position 150 to 153 (150 to 153 (SKFE)) interacts with 7,8-dihydropteroate. Glu174 contacts Mg(2+). 181–183 (WDA) serves as a coordination point for 7,8-dihydropteroate. Mg(2+) contacts are provided by His201 and Asp203. ATP-binding positions include Asn301, Arg338, and 351-354 (DAAH). Asp384 lines the Mg(2+) pocket.

This sequence belongs to the folylpolyglutamate synthase family. As to quaternary structure, monomer. Requires Mg(2+) as cofactor.

It catalyses the reaction 7,8-dihydropteroate + L-glutamate + ATP = 7,8-dihydrofolate + ADP + phosphate + H(+). It carries out the reaction (6S)-5,6,7,8-tetrahydrofolyl-(gamma-L-Glu)(n) + L-glutamate + ATP = (6S)-5,6,7,8-tetrahydrofolyl-(gamma-L-Glu)(n+1) + ADP + phosphate + H(+). Its pathway is cofactor biosynthesis; tetrahydrofolate biosynthesis; 7,8-dihydrofolate from 2-amino-4-hydroxy-6-hydroxymethyl-7,8-dihydropteridine diphosphate and 4-aminobenzoate: step 2/2. It participates in cofactor biosynthesis; tetrahydrofolylpolyglutamate biosynthesis. In terms of biological role, catalyzes the addition of a glutamate residue to dihydropteroate (7,8-dihydropteroate or H2Pte) to form dihydrofolate (7,8-dihydrofolate monoglutamate or H2Pte-Glu). Also catalyzes successive additions of L-glutamate to tetrahydrofolate, leading to folylpolyglutamate derivatives. Is involved in the bioactivation of the antituberculous drug para-aminosalicylic acid (PAS). Is able to use hydroxy-dihydropteroate (H2PtePAS) as substrate, which is the product formed by the action of DHPS (FolP1) on PAS, leading to hydroxy-dihydrofolate (H2PtePAS-Glu). This compound inhibits dihydrofolate reductase DHFR (DfrA), the next enzyme in the folate pathway, and thus disrupts the folate-dependent metabolic pathways. The protein is Dihydrofolate synthase/folylpolyglutamate synthase of Mycobacterium tuberculosis (strain ATCC 25618 / H37Rv).